Here is a 347-residue protein sequence, read N- to C-terminus: UDP-N-acetylenolpyruvoylglucosamine reductase (347 aa).

An FAD-binding PCMH-type domain is found at 17–187 (IEQLAAQLVV…TAVGLKFAKA (171 aa)). Arg-163 is a catalytic residue. The Proton donor role is filled by Ser-232. Glu-327 is a catalytic residue.

This sequence belongs to the MurB family. It depends on FAD as a cofactor.

Its subcellular location is the cytoplasm. It catalyses the reaction UDP-N-acetyl-alpha-D-muramate + NADP(+) = UDP-N-acetyl-3-O-(1-carboxyvinyl)-alpha-D-glucosamine + NADPH + H(+). It functions in the pathway cell wall biogenesis; peptidoglycan biosynthesis. Cell wall formation. The chain is UDP-N-acetylenolpyruvoylglucosamine reductase from Vibrio cholerae serotype O1 (strain ATCC 39315 / El Tor Inaba N16961).